The sequence spans 273 residues: Protein FAM210A (273 aa).

Residues 97 to 106 (SSSATSSGPP) are compositionally biased toward low complexity. The disordered stretch occupies residues 97 to 116 (SSSATSSGPPSEKKEDPDPL). Positions 107–116 (SEKKEDPDPL) are enriched in basic and acidic residues. The DUF1279 domain occupies 118–230 (DRSISLYQRF…GYMSTPPPVK (113 aa)). The helical transmembrane segment at 137–157 (VLIPVHLITSAVWFGTFYYAA) threads the bilayer. Residues 230 to 269 (KEYLQDKMEETKELLTEKMEETKDRLTEKLQETKGKVSLK) are a coiled coil. The segment at 247-273 (KMEETKDRLTEKLQETKGKVSLKKKVE) is disordered.

The protein belongs to the FAM210 family. As to quaternary structure, interacts with ATAD3A.

The protein localises to the membrane. Its subcellular location is the mitochondrion. The protein resides in the cytoplasm. Its function is as follows. May play a role in the structure and strength of both muscle and bone. This chain is Protein FAM210A (FAM210A), found in Bos taurus (Bovine).